The chain runs to 296 residues: NAD kinase (296 aa).

Residue aspartate 72 is the Proton acceptor of the active site. NAD(+) contacts are provided by residues 72–73, 146–147, arginine 157, lysine 174, aspartate 176, 187–192, and glutamine 247; these read DG, ND, and TAYALS.

It belongs to the NAD kinase family. A divalent metal cation serves as cofactor.

It is found in the cytoplasm. It carries out the reaction NAD(+) + ATP = ADP + NADP(+) + H(+). Involved in the regulation of the intracellular balance of NAD and NADP, and is a key enzyme in the biosynthesis of NADP. Catalyzes specifically the phosphorylation on 2'-hydroxyl of the adenosine moiety of NAD to yield NADP. This is NAD kinase from Pseudomonas putida (strain GB-1).